We begin with the raw amino-acid sequence, 417 residues long: Cobalamin binding intrinsic factor (417 aa).

Residues 1–18 (MAWLTLYLLSVLWAVAGT) form the signal peptide. 3 disulfides stabilise this stretch: cysteine 26/cysteine 246, cysteine 103/cysteine 288, and cysteine 143/cysteine 182. A cob(II)alamin-binding site is contributed by aspartate 171. Serine 191 carries the phosphoserine modification. Aspartate 222 and glutamine 270 together coordinate cob(II)alamin. N-linked (GlcNAc...) asparagine glycosylation is found at asparagine 311 and asparagine 330. Cob(II)alamin-binding positions include 365-370 (SWGLIV) and 386-395 (WEFLSGKTPL). Residue asparagine 413 is glycosylated (N-linked (GlcNAc...) asparagine).

This sequence belongs to the eukaryotic cobalamin transport proteins family. Interacts with CUBN (via CUB domains). In terms of tissue distribution, gastric mucosa.

It is found in the secreted. Promotes absorption of the essential vitamin cobalamin (Cbl) in the ileum. After interaction with CUBN, the CBLIF-cobalamin complex is internalized via receptor-mediated endocytosis. The chain is Cobalamin binding intrinsic factor (Cblif) from Mus musculus (Mouse).